The primary structure comprises 63 residues: Large ribosomal subunit protein bL35 (63 aa).

It belongs to the bacterial ribosomal protein bL35 family.

The protein is Large ribosomal subunit protein bL35 of Sulfurimonas denitrificans (strain ATCC 33889 / DSM 1251) (Thiomicrospira denitrificans (strain ATCC 33889 / DSM 1251)).